The sequence spans 164 residues: Arginine repressor (164 aa).

Belongs to the ArgR family.

Its subcellular location is the cytoplasm. The protein operates within amino-acid biosynthesis; L-arginine biosynthesis [regulation]. Its function is as follows. Regulates arginine biosynthesis genes. The protein is Arginine repressor of Mycobacterium avium (strain 104).